Consider the following 98-residue polypeptide: Keratin-associated protein 3-1 (98 aa).

N-acetylalanine is present on A2. 4 repeat units span residues C3–R7, C8–R12, F47–S51, and Y55–D59. Positions C3–D59 are 4 X 5 AA repeats of C-C-X(3).

Belongs to the KRTAP type 3 family. In terms of assembly, interacts with wool keratins. Wool.

Functionally, in the wool cortex, wool keratin intermediate filaments are embedded in an interfilamentous matrix, consisting of hair keratin-associated proteins (KRTAP), which are essential for the formation of a rigid and resistant wool shaft through their extensive disulfide bond cross-linking with abundant cysteine residues of wool keratins. The matrix proteins include the high-sulfur and high-glycine-tyrosine keratins. The protein is Keratin-associated protein 3-1 (KRTAP3-1) of Capra hircus (Goat).